The primary structure comprises 211 residues: MYQPDFPTVPFRLGLYPVVDSVEWIERLLEAGVRTIQLRIKDKRDEEVEADVIAAIALGRRYDARLFINDYWRLAMKHNAYGVHLGQEDLETTDLKAIQAAGLRLGVSTHDDMEIDIALAAKPSYIALGHVFPTQTKQMPSAPQGLAQLVRHIERLADYPTVAIGGISLEHAPAVLATGVGSIAVVSAITQAADWRDATAQLLAIAGVGDE.

4-amino-2-methyl-5-(diphosphooxymethyl)pyrimidine is bound by residues 37 to 41 (QLRIK) and asparagine 69. Residues aspartate 70 and aspartate 89 each coordinate Mg(2+). A 4-amino-2-methyl-5-(diphosphooxymethyl)pyrimidine-binding site is contributed by serine 108. Position 134–136 (134–136 (TQT)) interacts with 2-[(2R,5Z)-2-carboxy-4-methylthiazol-5(2H)-ylidene]ethyl phosphate. Lysine 137 serves as a coordination point for 4-amino-2-methyl-5-(diphosphooxymethyl)pyrimidine. 2-[(2R,5Z)-2-carboxy-4-methylthiazol-5(2H)-ylidene]ethyl phosphate contacts are provided by residues glycine 166 and 186–187 (VS).

This sequence belongs to the thiamine-phosphate synthase family. Mg(2+) serves as cofactor.

It catalyses the reaction 2-[(2R,5Z)-2-carboxy-4-methylthiazol-5(2H)-ylidene]ethyl phosphate + 4-amino-2-methyl-5-(diphosphooxymethyl)pyrimidine + 2 H(+) = thiamine phosphate + CO2 + diphosphate. The catalysed reaction is 2-(2-carboxy-4-methylthiazol-5-yl)ethyl phosphate + 4-amino-2-methyl-5-(diphosphooxymethyl)pyrimidine + 2 H(+) = thiamine phosphate + CO2 + diphosphate. It carries out the reaction 4-methyl-5-(2-phosphooxyethyl)-thiazole + 4-amino-2-methyl-5-(diphosphooxymethyl)pyrimidine + H(+) = thiamine phosphate + diphosphate. It participates in cofactor biosynthesis; thiamine diphosphate biosynthesis; thiamine phosphate from 4-amino-2-methyl-5-diphosphomethylpyrimidine and 4-methyl-5-(2-phosphoethyl)-thiazole: step 1/1. In terms of biological role, condenses 4-methyl-5-(beta-hydroxyethyl)thiazole monophosphate (THZ-P) and 2-methyl-4-amino-5-hydroxymethyl pyrimidine pyrophosphate (HMP-PP) to form thiamine monophosphate (TMP). In Salmonella paratyphi A (strain ATCC 9150 / SARB42), this protein is Thiamine-phosphate synthase.